A 660-amino-acid chain; its full sequence is Arginine--tRNA ligase, cytoplasmic (660 aa).

Met1 is modified (N-acetylmethionine). Residues Met1 to Asn72 form a could be involved in the assembly of the multisynthetase complex region. Residues Ser200 to Asn202, His211, Tyr384, Asp388, and Gln412 each bind L-arginine. Positions Pro201 to Leu212 match the 'HIGH' region motif. The interval Asn529 to Ser543 is interaction with tRNA.

The protein belongs to the class-I aminoacyl-tRNA synthetase family. Interacts (via N-terminus) with AIMP1 (via N-terminus); this stimulates its catalytic activity. Interacts (via N-terminus) with LARS2 (via C-terminus). Monomer. Part of a multisubunit complex that groups tRNA ligases for Arg (RARS1), Asp (DARS1), Gln (QARS1), Ile (IARS1), Leu (LARS1), Lys (KARS1), Met (MARS1) the bifunctional ligase for Glu and Pro (EPRS1) and the auxiliary subunits AIMP1/p43, AIMP2/p38 and EEF1E1/p18. Interacts with QARS1. Part of a complex composed of RARS1, QARS1 and AIMP1.

Its subcellular location is the cytoplasm. It is found in the cytosol. The catalysed reaction is tRNA(Arg) + L-arginine + ATP = L-arginyl-tRNA(Arg) + AMP + diphosphate. In terms of biological role, forms part of a macromolecular complex that catalyzes the attachment of specific amino acids to cognate tRNAs during protein synthesis. Modulates the secretion of AIMP1 and may be involved in generation of the inflammatory cytokine EMAP2 from AIMP1. This Mus musculus (Mouse) protein is Arginine--tRNA ligase, cytoplasmic (Rars1).